We begin with the raw amino-acid sequence, 217 residues long: Large ribosomal subunit protein uL4 (217 aa).

The segment at 42–100 (RAAARQGTHSTKTRGDVSGGGRKPYRQKGTGRARQGSTRAPQFTGGGVVHGPKPRDYSQ) is disordered.

This sequence belongs to the universal ribosomal protein uL4 family. Part of the 50S ribosomal subunit.

Its function is as follows. One of the primary rRNA binding proteins, this protein initially binds near the 5'-end of the 23S rRNA. It is important during the early stages of 50S assembly. It makes multiple contacts with different domains of the 23S rRNA in the assembled 50S subunit and ribosome. In terms of biological role, forms part of the polypeptide exit tunnel. This Mycolicibacterium paratuberculosis (strain ATCC BAA-968 / K-10) (Mycobacterium paratuberculosis) protein is Large ribosomal subunit protein uL4.